Reading from the N-terminus, the 573-residue chain is WRKY transcription factor SUSIBA2 (573 aa).

2 disordered regions span residues 56–133 (AHPD…CSRE) and 157–192 (PAEVGTSEPQQMNSSDNAMQEPQSENVADKSADDGY). The span at 64-85 (PRDKSVRNAHEDRGSRDFEFKP) shows a compositional bias: basic and acidic residues. Positions 108–122 (MQNQSMNPSSSSSNM) are enriched in low complexity. Over residues 163-182 (SEPQQMNSSDNAMQEPQSEN) the composition is skewed to polar residues. Residues 183 to 192 (VADKSADDGY) are compositionally biased toward basic and acidic residues. The WRKY 1 DNA-binding region spans 183 to 247 (VADKSADDGY…YKGRHNHPKP (65 aa)). Zn(2+) is bound by residues Cys-214, Cys-219, His-242, and His-244. The segment at 240–332 (GRHNHPKPQP…EDLESKRRKM (93 aa)) is disordered. Over residues 263–277 (GEERYDGASAADDKS) the composition is skewed to basic and acidic residues. A DNA-binding region (WRKY 2) is located at residues 357-422 (SEVDILDDGY…YEGKHNHEVP (66 aa)). Cys-388, Cys-393, His-417, and His-419 together coordinate Zn(2+).

Belongs to the WRKY group I family. As to expression, expressed in endosperm, but not in leaves.

It localises to the nucleus. Transcription factor involved in starch synthesis. Acts as a transcriptional activator in sugar signaling. Interacts specifically with the SURE and W-box elements, but not with the SP8a element. This Hordeum vulgare (Barley) protein is WRKY transcription factor SUSIBA2.